We begin with the raw amino-acid sequence, 1456 residues long: DNA polymerase gamma, mitochondrial (1456 aa).

Residues 1 to 41 constitute a mitochondrion transit peptide; it reads MLTPVRCRTVPNATVATAARVLRRANLFSRYPRQLGHLRWD. 2 disordered regions span residues 1200-1266 and 1308-1443; these read APEM…SLDD and AVTT…SWKP. Over residues 1204 to 1239 the composition is skewed to low complexity; sequence AAVPSTSSESKSKASATTSTTTTENATASPSSSSNV. Residues 1315–1325 are compositionally biased toward pro residues; the sequence is PEPPTNPPPVA. Low complexity-rich tracts occupy residues 1346–1371 and 1411–1428; these read PKNP…TPKP and TASV…ATAT.

It belongs to the DNA polymerase type-A family. Mg(2+) serves as cofactor.

The protein resides in the mitochondrion. The enzyme catalyses DNA(n) + a 2'-deoxyribonucleoside 5'-triphosphate = DNA(n+1) + diphosphate. Its function is as follows. Involved in the replication of mitochondrial DNA. This chain is DNA polymerase gamma, mitochondrial (mip-1), found in Neurospora crassa (strain ATCC 24698 / 74-OR23-1A / CBS 708.71 / DSM 1257 / FGSC 987).